The following is a 322-amino-acid chain: Lipoyl synthase (322 aa).

The segment covering 1–25 has biased composition (basic and acidic residues); that stretch reads MSQRITIDHRSAPALRHPEKAHRPD. The interval 1 to 29 is disordered; that stretch reads MSQRITIDHRSAPALRHPEKAHRPDNPIQ. [4Fe-4S] cluster-binding residues include cysteine 61, cysteine 66, cysteine 72, cysteine 87, cysteine 91, cysteine 94, and serine 300. The Radical SAM core domain maps to 73–289; it reads WSQRHATMMI…AAAARSKGFL (217 aa).

It belongs to the radical SAM superfamily. Lipoyl synthase family. It depends on [4Fe-4S] cluster as a cofactor.

The protein resides in the cytoplasm. The catalysed reaction is [[Fe-S] cluster scaffold protein carrying a second [4Fe-4S](2+) cluster] + N(6)-octanoyl-L-lysyl-[protein] + 2 oxidized [2Fe-2S]-[ferredoxin] + 2 S-adenosyl-L-methionine + 4 H(+) = [[Fe-S] cluster scaffold protein] + N(6)-[(R)-dihydrolipoyl]-L-lysyl-[protein] + 4 Fe(3+) + 2 hydrogen sulfide + 2 5'-deoxyadenosine + 2 L-methionine + 2 reduced [2Fe-2S]-[ferredoxin]. Its pathway is protein modification; protein lipoylation via endogenous pathway; protein N(6)-(lipoyl)lysine from octanoyl-[acyl-carrier-protein]: step 2/2. Functionally, catalyzes the radical-mediated insertion of two sulfur atoms into the C-6 and C-8 positions of the octanoyl moiety bound to the lipoyl domains of lipoate-dependent enzymes, thereby converting the octanoylated domains into lipoylated derivatives. This Gluconobacter oxydans (strain 621H) (Gluconobacter suboxydans) protein is Lipoyl synthase.